The sequence spans 884 residues: MTDVTVKSLAAEIQTPVDRLVQQFADAGIKKSDVDSVTQQEKEILLAHLNREHGSVPNKLTLQRKTRSTLNIPSTGGKSKSVQIEVRKKRTYVNTPEAEQAKAEEQAQREAEATAQKIAEEKAKREAEEQAKREAAEKAKRQAAEKEKVTNQQTDEKTKPAQTDKARREAEAAELKRSVEEETRRKVEEDAKRVAEEARKMAAENEGKWPEPVAEQTESADYHVTTSQHARAAEDENDAKVEGDRRSRTRGGKATKQKKGNKLSESKADREEARAVGRKGKRKPSTLQQSFNKPVVAVNRDVVIGETVTVAELANKMAVKGSQVIKAMMKLGAMATINQVIDQETAQLVAEEMGHKVILRRENELEEALMSDRDIGVEAAAEHRAPVVTIMGHVDHGKTSLLDYIRSTKVASGEAGGITQHIGAYHVETENGMITFLDTPGHAAFTSMRARGAQATDIVVLVVAADDGVMPQTIEAIQHAKAANVPVVVAVNKIDKPEADPDRVKTELSQYGIQPEEWGGESQFINVSAKAGIGIDELLNAILLQAEVLELKAVRTGMANGVVIESFLDKGRGPVATVLVQQGTLNKGDIVLCGFEYGRVRAMRDELGRDITSVGPSIPVEILGLSSVPAAGDEVTVVRDEKKAREVALYRQGKFREVKLARQQKSKLENMFANMTEGEVSELNIVIKSDVQGSCEAICDSLEKLSTDEVKVRIVGSGVGGITETDATLAAASGAIILGFNVRADASARRVVETEGLDLRYYSVIYSLIDEVKQAMSGMLAPEYKQQIIGLAEVRDVFKSPKFGAIAGCMVTEGVIKRNNPIRVLRDNVVIYEGELESLRRFKDDVSEVRNGMECGIGVKNYNDVRTGDVIEVFEIIEIKRTIA.

Residues valine 93–glutamine 288 form a disordered region. Residues glutamate 99–tryptophan 209 show a composition bias toward basic and acidic residues. Residues glutamine 216–histidine 229 show a composition bias toward polar residues. Residues arginine 231 to arginine 246 are compositionally biased toward basic and acidic residues. The segment covering serine 247–asparagine 261 has biased composition (basic residues). Residues lysine 262–alanine 275 show a composition bias toward basic and acidic residues. In terms of domain architecture, tr-type G spans histidine 383–lysine 552. Residues glycine 392–threonine 399 are G1. Glycine 392–threonine 399 is a binding site for GTP. The G2 stretch occupies residues glycine 417 to histidine 421. Residues aspartate 438–glycine 441 are G3. GTP-binding positions include aspartate 438–histidine 442 and asparagine 492–aspartate 495. A G4 region spans residues asparagine 492–aspartate 495. Positions serine 528–lysine 530 are G5.

It belongs to the TRAFAC class translation factor GTPase superfamily. Classic translation factor GTPase family. IF-2 subfamily.

It localises to the cytoplasm. Its function is as follows. One of the essential components for the initiation of protein synthesis. Protects formylmethionyl-tRNA from spontaneous hydrolysis and promotes its binding to the 30S ribosomal subunits. Also involved in the hydrolysis of GTP during the formation of the 70S ribosomal complex. The polypeptide is Translation initiation factor IF-2 (Yersinia pestis bv. Antiqua (strain Antiqua)).